A 340-amino-acid chain; its full sequence is Dihydroorotate dehydrogenase (quinone) (340 aa).

FMN contacts are provided by residues 65–69 (AGADK) and Thr89. Lys69 contacts substrate. Substrate is bound at residue 114-118 (NRNGF). 2 residues coordinate FMN: Asn142 and Asn175. Asn175 is a binding site for substrate. The active-site Nucleophile is the Ser178. Substrate is bound at residue Asn180. FMN is bound by residues Lys220 and Thr248. 249 to 250 (NT) contacts substrate. FMN-binding positions include Gly271, Gly300, and 321 to 322 (YS).

The protein belongs to the dihydroorotate dehydrogenase family. Type 2 subfamily. Monomer. FMN is required as a cofactor.

The protein localises to the cell membrane. The enzyme catalyses (S)-dihydroorotate + a quinone = orotate + a quinol. Its pathway is pyrimidine metabolism; UMP biosynthesis via de novo pathway; orotate from (S)-dihydroorotate (quinone route): step 1/1. In terms of biological role, catalyzes the conversion of dihydroorotate to orotate with quinone as electron acceptor. This is Dihydroorotate dehydrogenase (quinone) from Mannheimia succiniciproducens (strain KCTC 0769BP / MBEL55E).